Here is a 103-residue protein sequence, read N- to C-terminus: Small ribosomal subunit protein uS10 (103 aa).

This sequence belongs to the universal ribosomal protein uS10 family. As to quaternary structure, part of the 30S ribosomal subunit.

Functionally, involved in the binding of tRNA to the ribosomes. This Shewanella loihica (strain ATCC BAA-1088 / PV-4) protein is Small ribosomal subunit protein uS10.